A 403-amino-acid polypeptide reads, in one-letter code: Homoserine O-succinyltransferase (403 aa).

The AB hydrolase-1 domain maps to 58–366 (NAVLICHALS…ESNHGHDAFL (309 aa)). Ser-164 functions as the Nucleophile in the catalytic mechanism. Arg-234 lines the substrate pocket. Active-site residues include Asp-329 and His-362. Asp-363 contributes to the substrate binding site.

Belongs to the AB hydrolase superfamily. MetX family. As to quaternary structure, homodimer.

It is found in the cytoplasm. The enzyme catalyses L-homoserine + succinyl-CoA = O-succinyl-L-homoserine + CoA. The protein operates within amino-acid biosynthesis; L-methionine biosynthesis via de novo pathway; O-succinyl-L-homoserine from L-homoserine: step 1/1. Functionally, transfers a succinyl group from succinyl-CoA to L-homoserine, forming succinyl-L-homoserine. This Halothiobacillus neapolitanus (strain ATCC 23641 / c2) (Thiobacillus neapolitanus) protein is Homoserine O-succinyltransferase.